The primary structure comprises 436 residues: 3-ketoacyl-CoA thiolase (436 aa).

Residue Cys-99 is the Acyl-thioester intermediate of the active site. Residues His-392 and Cys-422 each act as proton acceptor in the active site.

Belongs to the thiolase-like superfamily. Thiolase family. Heterotetramer of two alpha chains (FadJ) and two beta chains (FadI).

It localises to the cytoplasm. It catalyses the reaction an acyl-CoA + acetyl-CoA = a 3-oxoacyl-CoA + CoA. Its pathway is lipid metabolism; fatty acid beta-oxidation. Catalyzes the final step of fatty acid oxidation in which acetyl-CoA is released and the CoA ester of a fatty acid two carbons shorter is formed. This Shigella dysenteriae serotype 1 (strain Sd197) protein is 3-ketoacyl-CoA thiolase.